Here is a 372-residue protein sequence, read N- to C-terminus: Alanine dehydrogenase 2 (372 aa).

His-95 is an active-site residue. NAD(+) is bound at residue 169-199; sequence KVTIIGGGQAGTNAAKIALGLGADVTILDVN.

It belongs to the AlaDH/PNT family.

It catalyses the reaction L-alanine + NAD(+) + H2O = pyruvate + NH4(+) + NADH + H(+). It participates in amino-acid degradation; L-alanine degradation via dehydrogenase pathway; NH(3) and pyruvate from L-alanine: step 1/1. May play a role in cell wall synthesis as L-alanine is an important constituent of the peptidoglycan layer. The polypeptide is Alanine dehydrogenase 2 (ald2) (Staphylococcus aureus (strain N315)).